A 300-amino-acid polypeptide reads, in one-letter code: tRNA pseudouridine synthase B (300 aa).

Aspartate 38 functions as the Nucleophile in the catalytic mechanism.

Belongs to the pseudouridine synthase TruB family. Type 1 subfamily.

It carries out the reaction uridine(55) in tRNA = pseudouridine(55) in tRNA. Its function is as follows. Responsible for synthesis of pseudouridine from uracil-55 in the psi GC loop of transfer RNAs. The sequence is that of tRNA pseudouridine synthase B from Anaplasma phagocytophilum (strain HZ).